The following is a 171-amino-acid chain: MICITGTPGVGKTTLAGILRERGLEVISLGELIRQKGFVLGRDPIRGYLEADIEAACSHLQEMEGLDVVEGHLSHLCRSCSMVIVLRLHPEVLRGRLEGRGYPEGKVLENLEAEALDVCTVEAFEIHGERVHEVDTTGRSPHEVADIITDIMNGSRVCPPGGVDFSGWLLG.

5 residues coordinate ATP: glycine 9, glycine 11, lysine 12, threonine 13, and threonine 14. Residues 28 to 51 (SLGELIRQKGFVLGRDPIRGYLEA) are NMP. Residues 99–109 (GRGYPEGKVLE) are LID. Arginine 100 lines the ATP pocket.

This sequence belongs to the adenylate kinase family. AK6 subfamily. As to quaternary structure, interacts with uS11. Not a structural component of 40S pre-ribosomes, but transiently interacts with them by binding to uS11.

The catalysed reaction is AMP + ATP = 2 ADP. The enzyme catalyses ATP + H2O = ADP + phosphate + H(+). In terms of biological role, broad-specificity nucleoside monophosphate (NMP) kinase that catalyzes the reversible transfer of the terminal phosphate group between nucleoside triphosphates and monophosphates. Also has ATPase activity. Involved in the late maturation steps of the 30S ribosomal particles, specifically 16S rRNA maturation. While NMP activity is not required for ribosome maturation, ATPase activity is. Associates transiently with small ribosomal subunit protein uS11. ATP hydrolysis breaks the interaction with uS11. May temporarily remove uS11 from the ribosome to enable a conformational change of the ribosomal RNA that is needed for the final maturation step of the small ribosomal subunit. This chain is Putative adenylate kinase, found in Methanothermobacter thermautotrophicus (strain ATCC 29096 / DSM 1053 / JCM 10044 / NBRC 100330 / Delta H) (Methanobacterium thermoautotrophicum).